The chain runs to 613 residues: 4-hydroxy-3-methylbut-2-en-1-yl diphosphate synthase (flavodoxin) (613 aa).

[4Fe-4S] cluster is bound by residues C514, C517, C548, and E555.

It belongs to the IspG family. [4Fe-4S] cluster is required as a cofactor.

The enzyme catalyses (2E)-4-hydroxy-3-methylbut-2-enyl diphosphate + oxidized [flavodoxin] + H2O + 2 H(+) = 2-C-methyl-D-erythritol 2,4-cyclic diphosphate + reduced [flavodoxin]. It participates in isoprenoid biosynthesis; isopentenyl diphosphate biosynthesis via DXP pathway; isopentenyl diphosphate from 1-deoxy-D-xylulose 5-phosphate: step 5/6. Converts 2C-methyl-D-erythritol 2,4-cyclodiphosphate (ME-2,4cPP) into 1-hydroxy-2-methyl-2-(E)-butenyl 4-diphosphate. In Chlamydia pneumoniae (Chlamydophila pneumoniae), this protein is 4-hydroxy-3-methylbut-2-en-1-yl diphosphate synthase (flavodoxin).